A 333-amino-acid chain; its full sequence is Fe-S cluster assembly protein dre2 (333 aa).

A disordered region spans residues 1 to 29 (MSPITLDLTSDFNPANTTGAGSSSSQPRT). Over residues 7 to 28 (DLTSDFNPANTTGAGSSSSQPR) the composition is skewed to polar residues. Residues 23–158 (SSSQPRTLLV…KPDYAEEEAV (136 aa)) form an N-terminal SAM-like domain region. The linker stretch occupies residues 159 to 225 (PLRFGLKRKT…EDTLLTEADL (67 aa)). C235, C246, C249, and C251 together coordinate [2Fe-2S] cluster. The interval 235–251 (CQPKPGKKRRACKDCTC) is fe-S binding site A. Positions 296, 299, 307, and 310 each coordinate [4Fe-4S] cluster. Short sequence motifs (cx2C motif) lie at residues 296 to 299 (CGSC) and 307 to 310 (CAGC). The segment at 296-310 (CGSCALGDAFRCAGC) is fe-S binding site B.

This sequence belongs to the anamorsin family. Monomer. Interacts with tah18. Interacts with mia40. [2Fe-2S] cluster serves as cofactor. Requires [4Fe-4S] cluster as cofactor.

It localises to the cytoplasm. It is found in the mitochondrion intermembrane space. Functionally, component of the cytosolic iron-sulfur (Fe-S) protein assembly (CIA) machinery required for the maturation of extramitochondrial Fe-S proteins. Part of an electron transfer chain functioning in an early step of cytosolic Fe-S biogenesis, facilitating the de novo assembly of a [4Fe-4S] cluster on the scaffold complex cfd1-nbp35. Electrons are transferred to dre2 from NADPH via the FAD- and FMN-containing protein tah18. Tah18-dre2 are also required for the assembly of the diferric tyrosyl radical cofactor of ribonucleotide reductase (RNR), probably by providing electrons for reduction during radical cofactor maturation in the catalytic small subunit rnr2. This Neurospora crassa (strain ATCC 24698 / 74-OR23-1A / CBS 708.71 / DSM 1257 / FGSC 987) protein is Fe-S cluster assembly protein dre2.